A 794-amino-acid polypeptide reads, in one-letter code: PAN2-PAN3 deadenylation complex subunit PAN3 (794 aa).

The C3H1-type zinc-finger motif lies at 7 to 36 (SAKDVLCKNILIYGYCKFQDKGCAFSHNKQ). 2 disordered regions span residues 40–97 (PQQQ…TQSK) and 187–226 (AQVGNNPGSTAPANLQLQQKQPQQPQQPQQPQQHQQQQQL). Composition is skewed to polar residues over residues 83-94 (IQSNGMVNSQET) and 189-199 (VGNNPGSTAPA). The span at 200–226 (NLQLQQKQPQQPQQPQQPQQHQQQQQL) shows a compositional bias: low complexity. The segment at 372 to 668 (QTMQHLSLPD…MDQFILQYIS (297 aa)) is pseudokinase domain. Residues arginine 425 and 494-501 (DYYPNLTT) each bind ATP. Positions 669–707 (SHFMTLMNKLQNSHDWVELQLSTELENARLFRLMTKINF) form a coiled coil. Residues 708–794 (IISEMPTYDL…IDTQFRLLRG (87 aa)) are knob domain.

This sequence belongs to the protein kinase superfamily. PAN3 family. As to quaternary structure, homodimer. Forms a heterotrimer with a catalytic subunit PAN2 to form the poly(A)-nuclease (PAN) deadenylation complex. Interacts (via PAM-2 motif) with poly(A)-binding protein PAB1 (via PABC domain), conferring substrate specificity of the enzyme complex.

The protein resides in the cytoplasm. Regulatory subunit of the poly(A)-nuclease (PAN) deadenylation complex, one of two cytoplasmic mRNA deadenylases involved in mRNA turnover. PAN specifically shortens poly(A) tails of RNA and the activity is stimulated by poly(A)-binding protein PAB1. PAN deadenylation is followed by rapid degradation of the shortened mRNA tails by the CCR4-NOT complex. Deadenylated mRNAs are then degraded by two alternative mechanisms, namely exosome-mediated 3'-5' exonucleolytic degradation, or deadenylation-dependent mRNA decaping and subsequent 5'-3' exonucleolytic degradation by XRN1. May also be involved in post-transcriptional maturation of mRNA poly(A) tails. PAN3 acts as a positive regulator for PAN activity, recruiting the catalytic subunit PAN2 to mRNA via its interaction with RNA and with PAB1. In Lodderomyces elongisporus (strain ATCC 11503 / CBS 2605 / JCM 1781 / NBRC 1676 / NRRL YB-4239) (Yeast), this protein is PAN2-PAN3 deadenylation complex subunit PAN3.